A 129-amino-acid chain; its full sequence is Small ribosomal subunit protein uS11 (129 aa).

The protein belongs to the universal ribosomal protein uS11 family. In terms of assembly, part of the 30S ribosomal subunit. Interacts with proteins S7 and S18. Binds to IF-3.

Functionally, located on the platform of the 30S subunit, it bridges several disparate RNA helices of the 16S rRNA. Forms part of the Shine-Dalgarno cleft in the 70S ribosome. The protein is Small ribosomal subunit protein uS11 of Geobacillus thermodenitrificans (strain NG80-2).